A 611-amino-acid polypeptide reads, in one-letter code: Dolabella-3,7-dien-18-ol synthase TPS06 (611 aa).

Residues D363, D367, D507, T511, and E515 each coordinate Mg(2+). The DDXXD motif; degenerate signature appears at 363–367; sequence DNTFD.

It belongs to the terpene synthase family. Tpsa subfamily. Mg(2+) serves as cofactor. It depends on Mn(2+) as a cofactor. Predominantly expressed in flowers but also in stems, siliques, roots and leaves.

Its subcellular location is the cytoplasm. The catalysed reaction is (2E,6E,10E)-geranylgeranyl diphosphate + H2O = (3E,7E)-dolabella-3,7-dien-18-ol + diphosphate. The protein operates within secondary metabolite biosynthesis; terpenoid biosynthesis. Its function is as follows. Involved in terpene biosynthesis in roots. Possesses sesquiterpene (C15) synthase activity and diterpene (C20) synthase activity in vitro. Possesses dolabella-3,7-dien-18-ol synthase activity in vitro. Catalyzes the formation of dolabella-3,7-dien-18-ol from geranylgeranyl diphosphate. This is Dolabella-3,7-dien-18-ol synthase TPS06 from Arabidopsis thaliana (Mouse-ear cress).